A 640-amino-acid polypeptide reads, in one-letter code: Threonine--tRNA ligase (640 aa).

The TGS domain maps to 1–61 (MPVITLPDGS…SNDATLQIIT (61 aa)). Positions 242-533 (DHRKIGKQLD…LIEHYAGVFP (292 aa)) are catalytic. 3 residues coordinate Zn(2+): C333, H384, and H510.

The protein belongs to the class-II aminoacyl-tRNA synthetase family. In terms of assembly, homodimer. Requires Zn(2+) as cofactor.

The protein resides in the cytoplasm. The catalysed reaction is tRNA(Thr) + L-threonine + ATP = L-threonyl-tRNA(Thr) + AMP + diphosphate + H(+). Its function is as follows. Catalyzes the attachment of threonine to tRNA(Thr) in a two-step reaction: L-threonine is first activated by ATP to form Thr-AMP and then transferred to the acceptor end of tRNA(Thr). Also edits incorrectly charged L-seryl-tRNA(Thr). The chain is Threonine--tRNA ligase from Pseudomonas putida (strain GB-1).